A 146-amino-acid polypeptide reads, in one-letter code: uncharacterized protein (146 aa).

Residues 7-24 (VIALFLVTGLTLYAIRLL) traverse the membrane as a helical segment.

The protein localises to the membrane. This is an uncharacterized protein from Haemophilus influenzae (strain ATCC 51907 / DSM 11121 / KW20 / Rd).